Here is a 1105-residue protein sequence, read N- to C-terminus: Serine/threonine-protein kinase 4 homolog B (1105 aa).

Residues 23–274 form the Protein kinase domain; it reads FDLIECLGRG…AKDLLKHSFF (252 aa). ATP contacts are provided by residues 29–37 and Lys-52; that span reads LGRGSFGSV. The active-site Proton acceptor is Asp-142. Disordered regions lie at residues 348-396, 411-482, and 495-541; these read STQI…TKNN, SSSA…RQPA, and PSFG…SLPL. Low complexity-rich tracts occupy residues 358 to 396 and 411 to 437; these read QAQQQQQQAQQQQQQQQQQQQQYQPPSPNNNNRTTTKNN and SSSASASTSPSPSSISSNGNKSGTTTN. The segment covering 438–458 has biased composition (polar residues); sequence DYHTGNGRTSSSSPQFGLQHQ. Composition is skewed to low complexity over residues 459–473 and 513–541; these read NSSNSFPSSPNTVPS and PIGSPITKRPTPTMQSSTTTTTSSSSLPL. Positions 516-1105 are calpain-like cysteine protease-like; that stretch reads SPITKRPTPT…SEFDLDFYNN (590 aa). Domain III stretches follow at residues 641–668, 791–830, 836–972, and 1076–1103; these read EVSAKITMEPGYYVIIPATFEPNQEGSF, VHTQQQMPPGCYIIVPCTYDSRQEGSFTLTCYSDCQQGSI, SEQI…NVIQ, and VVIPSTFEPNIQDSFNLTIYSEFDLDFY.

In the N-terminal section; belongs to the protein kinase superfamily. STE Ser/Thr protein kinase family. STE20 subfamily. This sequence in the C-terminal section; belongs to the peptidase C2 family. Mn(2+) serves as cofactor.

The catalysed reaction is L-seryl-[protein] + ATP = O-phospho-L-seryl-[protein] + ADP + H(+). It catalyses the reaction L-threonyl-[protein] + ATP = O-phospho-L-threonyl-[protein] + ADP + H(+). Its function is as follows. Probable serine/threonine-protein kinase. The polypeptide is Serine/threonine-protein kinase 4 homolog B (krsB) (Dictyostelium discoideum (Social amoeba)).